We begin with the raw amino-acid sequence, 239 residues long: Guanylate kinase (239 aa).

The Guanylate kinase-like domain maps to 55 to 235 (GRIFVITGPS…TLAELQAILL (181 aa)). 62 to 69 (GPSGVGKS) provides a ligand contact to ATP.

This sequence belongs to the guanylate kinase family.

Its subcellular location is the cytoplasm. It catalyses the reaction GMP + ATP = GDP + ADP. Its function is as follows. Essential for recycling GMP and indirectly, cGMP. The chain is Guanylate kinase (gmk) from Mycoplasma pneumoniae (strain ATCC 29342 / M129 / Subtype 1) (Mycoplasmoides pneumoniae).